The chain runs to 681 residues: DNA ligase (681 aa).

Residues 45–49 (DFDFD), 94–95 (SL), and Glu120 each bind NAD(+). The active-site N6-AMP-lysine intermediate is the Lys122. Positions 143, 177, 289, and 313 each coordinate NAD(+). Cys403, Cys406, Cys421, and Cys426 together coordinate Zn(2+). A BRCT domain is found at 593 to 681 (ADQQPFAGQS…SLKIDFKNLI (89 aa)).

The protein belongs to the NAD-dependent DNA ligase family. LigA subfamily. Requires Mg(2+) as cofactor. Mn(2+) serves as cofactor.

The enzyme catalyses NAD(+) + (deoxyribonucleotide)n-3'-hydroxyl + 5'-phospho-(deoxyribonucleotide)m = (deoxyribonucleotide)n+m + AMP + beta-nicotinamide D-nucleotide.. DNA ligase that catalyzes the formation of phosphodiester linkages between 5'-phosphoryl and 3'-hydroxyl groups in double-stranded DNA using NAD as a coenzyme and as the energy source for the reaction. It is essential for DNA replication and repair of damaged DNA. This is DNA ligase from Leptospira interrogans serogroup Icterohaemorrhagiae serovar Lai (strain 56601).